A 1444-amino-acid chain; its full sequence is Bromodomain-containing protein 4 (1444 aa).

7 disordered regions span residues 1–44 (MGDG…PKRQ), 154–217 (VEIS…PQPI), 279–362 (AAPP…KQQE), 492–523 (PVMA…ERAQ), 540–645 (AALS…GGAA), 722–986 (CLRK…SSQP), and 1020–1422 (TSLM…RREA). Positions 11 to 27 (SGSSSSQGQPSSQAPSS) are enriched in low complexity. Positions 43–149 (RQTNQLQYLL…KVFLTKISEM (107 aa)) constitute a Bromo 1 domain. Polar residues predominate over residues 186–196 (ASPQTRGLSNL). The span at 206–216 (PQGPPTLPPQP) shows a compositional bias: pro residues. Residues 303-319 (TTTPTANDQLNESSPAE) are compositionally biased toward polar residues. Residues 327–347 (PRRDNTRPSKLPKKEAPDSQH) show a composition bias toward basic and acidic residues. Positions 358-467 (PKQQEQLRYC…DVFEMRFAKM (110 aa)) constitute a Bromo 2 domain. The segment covering 498 to 511 (SSSDTSSDSSSESE) has biased composition (low complexity). The tract at residues 498–517 (SSSDTSSDSSSESESSTDDS) is NPS region. The segment at 538–610 (QLAALSQPQA…SKKLSKKEGG (73 aa)) is BID region. The span at 549–569 (KPKKKEKEKKEKKKDKHKKKA) shows a compositional bias: basic residues. Residues 633-730 (DTEEDLGLTG…SCLRKKKKPA (98 aa)) enclose the NET domain. Composition is skewed to low complexity over residues 746 to 760 (GTSS…SSSS), 800 to 823 (LQPQ…HPSP), 919 to 954 (LQQS…QQQH), and 1036 to 1046 (PSLLQSVQVQS). The segment covering 1090-1109 (PLQTAQTQPGQHKVSMPSTK) has biased composition (polar residues). Residues 1110–1121 (AQQIIQQQQATQ) show a composition bias toward low complexity. The interval 1126–1444 (RQHKADSYNS…LMAIFEENLF (319 aa)) is C-terminal (CTD) region. Over residues 1151–1163 (QIPQYSLVHQSPS) the composition is skewed to polar residues. Over residues 1246-1255 (QDKEKFKQEP) the composition is skewed to basic and acidic residues. A compositionally biased stretch (low complexity) spans 1282–1296 (SSTTPSSGLKSSSDS). The segment covering 1298-1357 (EQFRRAAREKEEREKALKAQVEQAEKDRLRKEQEKLRGRDEEDSIEPPRRPLEEPRRRQE) has biased composition (basic and acidic residues). Positions 1367-1389 (QHQTQAQAQTLNPAQSPSASQPT) are enriched in low complexity. Residues 1405-1422 (QQREMARRREQERRRREA) are compositionally biased toward basic and acidic residues.

The protein belongs to the BET family. As to expression, widely expressed.

It is found in the nucleus. The protein resides in the chromosome. Its function is as follows. Chromatin reader protein that recognizes and binds acetylated histones and plays a key role in transmission of epigenetic memory across cell divisions and transcription regulation. Remains associated with acetylated chromatin throughout the entire cell cycle and provides epigenetic memory for postmitotic G1 gene transcription by preserving acetylated chromatin status and maintaining high-order chromatin structure. During interphase, plays a key role in regulating the transcription of signal-inducible genes by associating with the P-TEFb complex and recruiting it to promoters. This is Bromodomain-containing protein 4 (brd4) from Danio rerio (Zebrafish).